Reading from the N-terminus, the 391-residue chain is Phosphoglycerate kinase (391 aa).

Residues 21-23, arginine 36, 59-62, arginine 113, and arginine 146 contribute to the substrate site; these read DLN and HLGR. ATP is bound by residues lysine 197, glutamate 319, and 345 to 348; that span reads GGDT.

This sequence belongs to the phosphoglycerate kinase family. Monomer.

It localises to the cytoplasm. It carries out the reaction (2R)-3-phosphoglycerate + ATP = (2R)-3-phospho-glyceroyl phosphate + ADP. The protein operates within carbohydrate degradation; glycolysis; pyruvate from D-glyceraldehyde 3-phosphate: step 2/5. The protein is Phosphoglycerate kinase of Shewanella woodyi (strain ATCC 51908 / MS32).